The sequence spans 160 residues: Ribosome maturation factor RimP (160 aa).

This sequence belongs to the RimP family.

It localises to the cytoplasm. In terms of biological role, required for maturation of 30S ribosomal subunits. This Orientia tsutsugamushi (strain Ikeda) (Rickettsia tsutsugamushi) protein is Ribosome maturation factor RimP.